The primary structure comprises 628 residues: Biosynthetic arginine decarboxylase (628 aa).

Residue Lys-99 is modified to N6-(pyridoxal phosphate)lysine. 279-289 lines the substrate pocket; it reads VDVGGGLGIDY.

It belongs to the Orn/Lys/Arg decarboxylase class-II family. SpeA subfamily. Mg(2+) is required as a cofactor. The cofactor is pyridoxal 5'-phosphate.

It catalyses the reaction L-arginine + H(+) = agmatine + CO2. Its function is as follows. Catalyzes the biosynthesis of agmatine from arginine. In Xylella fastidiosa (strain 9a5c), this protein is Biosynthetic arginine decarboxylase.